The primary structure comprises 993 residues: Lateral signaling target protein 2 homolog (993 aa).

4 disordered regions span residues 340 to 449 (DQRN…DTTD), 494 to 623 (DGYG…TVVQ), 759 to 813 (GARH…GDQE), and 825 to 902 (AVNE…PPAW). Over residues 343 to 360 (NNNNNINNNSSSSSNSNS) the composition is skewed to low complexity. A compositionally biased stretch (polar residues) spans 372 to 405 (RSPSMLSLSTASPTPSHSIGSTFSAATSSTNPPV). Positions 409–448 (DGDDADDDDDGDDDDEDDDDDVDDDLVGNDDSDDDDDDTT) are enriched in acidic residues. S525 and S526 each carry phosphoserine. The span at 535-549 (SHNNTTTIKSPDSDG) shows a compositional bias: polar residues. The segment covering 559 to 608 (SRQRHSHHHHRHHHHHHRHSSHSSHSHHHQHQQHHSQPHPHRTTRSGRKR) has biased composition (basic residues). Low complexity predominate over residues 759-801 (GARHSAGASMQRNHTTIDNNNSTSSSPPDATITTTTTTTTTRS). S808 bears the Phosphoserine mark. Composition is skewed to low complexity over residues 842-862 (SNTPSSASSSATSSSSEQNSP) and 884-896 (TTATTTTTTGTGT). The FYVE-type zinc finger occupies 905-965 (DGKAPRCMSC…VCRDCYAREI (61 aa)). Residues C911, C914, C927, C930, C935, C938, C957, and C960 each coordinate Zn(2+). The interval 968–993 (SGGGGGGVVQMQRQQAANRPQTASAS) is disordered. The segment covering 978-993 (MQRQQAANRPQTASAS) has biased composition (polar residues).

It belongs to the lst-2 family.

Its function is as follows. Negative regulator of epidermal growth factor receptor (EGFR) signaling. In Drosophila willistoni (Fruit fly), this protein is Lateral signaling target protein 2 homolog.